Reading from the N-terminus, the 378-residue chain is UPF0725 protein At1g23970 (378 aa).

It belongs to the UPF0725 (EMB2204) family.

This is UPF0725 protein At1g23970 from Arabidopsis thaliana (Mouse-ear cress).